A 733-amino-acid polypeptide reads, in one-letter code: Hypermethylated in cancer 1 protein (733 aa).

One can recognise a BTB domain in the interval 47 to 110 (CDVIIVVQNA…IYTGRLTDSV (64 aa)). The segment at 154-315 (KYCHLRGGGS…PFRGSGGSPG (162 aa)) is mediates HDAC-dependent transcriptional repression. Position 159 is an omega-N-methylarginine (Arg159). The disordered stretch occupies residues 189–209 (YSSPAGPPPPPAAEPPSGPDA). Residues 193-206 (AGPPPPPAAEPPSG) are compositionally biased toward pro residues. Residue Ser237 is modified to Phosphoserine. Positions 241-247 (GLDLSKK) are interaction with CTBP1. Residues 241–421 (GLDLSKKSPP…PGGHLEGYPC (181 aa)) are disordered. At Ser248 the chain carries Phosphoserine. Lys333 is modified (N6-acetyllysine; alternate). A Glycyl lysine isopeptide (Lys-Gly) (interchain with G-Cter in SUMO); alternate cross-link involves residue Lys333. The span at 344–361 (ELVRDRGSPGERLEERGG) shows a compositional bias: basic and acidic residues. Phosphoserine is present on Ser366. The segment covering 368-380 (GGPPLGLVPPPRY) has biased composition (pro residues). C2H2-type zinc fingers lie at residues 437-464 (YVCIPCGKGFPSSEQLNAHVEAHVEEEE), 507-534 (YRCASCDKSYKDPATLRQHEKTHWLTRP), 535-562 (YPCTICGKKFTQRGTMTRHMRSHLGLKP), 563-590 (FACDACGMRFTRQYRLTEHMRIHSGEKP), and 591-618 (YECQVCGGKFAQQRNLISHMKMHAVGGA). Ser704 carries the post-translational modification Phosphoserine.

It belongs to the krueppel C2H2-type zinc-finger protein family. Hic subfamily. Self-associates. Interacts with HIC2. Interacts with CTBP1 and CTBP2. Interacts with TCF7L2 and ARID1A. Interacts with MTA1 and MBD3; indicative for an association with the NuRD complex. Interacts with SIRT1. Acetylated on several residues, including Lys-333. Lys-333 is deacetylated by SIRT1. In terms of processing, sumoylated on Lys-333 by a PIAS family member, which enhances interaction with MTA1, positively regulates transcriptional repression activity and is enhanced by HDAC4. In terms of tissue distribution, ubiquitously expressed with highest levels in heart and lung.

It localises to the nucleus. In terms of biological role, transcriptional repressor. Recognizes and binds to the consensus sequence '5-[CG]NG[CG]GGGCA[CA]CC-3'. May act as a tumor suppressor. Involved in development of head, face, limbs and ventral body wall. Involved in down-regulation of SIRT1 and thereby is involved in regulation of p53/TP53-dependent apoptotic DNA-damage responses. The specific target gene promoter association seems to be depend on corepressors, such as CTBP1 or CTBP2 and MTA1. In cooperation with MTA1 (indicative for an association with the NuRD complex) represses transcription from CCND1/cyclin-D1 and CDKN1C/p57Kip2 specifically in quiescent cells. Involved in regulation of the Wnt signaling pathway probably by association with TCF7L2 and preventing TCF7L2 and CTNNB1 association with promoters of TCF-responsive genes. Seems to repress transcription from E2F1 and ATOH1 which involves ARID1A, indicative for the participation of a distinct SWI/SNF-type chromatin-remodeling complex. Probably represses transcription from ACKR3, FGFBP1 and EFNA1. The chain is Hypermethylated in cancer 1 protein (Hic1) from Mus musculus (Mouse).